The primary structure comprises 567 residues: SRSF protein kinase 3 (567 aa).

Positions M1–G16 are enriched in gly residues. The tract at residues M1–L36 is disordered. Low complexity predominate over residues S17 to S32. Position 50 is a phosphoserine (S50). The 487-residue stretch at Y79–L565 folds into the Protein kinase domain. ATP-binding positions include L85–V93 and K108. D212 functions as the Proton acceptor in the catalytic mechanism. 2 disordered regions span residues Q238–E283 and A298–S351. A compositionally biased stretch (polar residues) spans S248–L258. Over residues S264–K279 the composition is skewed to basic residues. Residues A327–S348 are compositionally biased toward low complexity. S330 carries the phosphoserine modification.

The protein belongs to the protein kinase superfamily. CMGC Ser/Thr protein kinase family. In terms of tissue distribution, expressed in skeletal and heart muscle. Also expressed in the fetal brain.

The protein localises to the nucleus. The protein resides in the cytoplasm. It catalyses the reaction L-seryl-[protein] + ATP = O-phospho-L-seryl-[protein] + ADP + H(+). The enzyme catalyses L-threonyl-[protein] + ATP = O-phospho-L-threonyl-[protein] + ADP + H(+). In terms of biological role, serine/arginine-rich protein-specific kinase which specifically phosphorylates its substrates at serine residues located in regions rich in arginine/serine dipeptides, known as RS domains. Phosphorylates the SR splicing factor SRSF1 and the lamin-B receptor (LBR) in vitro. Required for normal muscle development. The polypeptide is SRSF protein kinase 3 (SRPK3) (Homo sapiens (Human)).